Consider the following 147-residue polypeptide: Hemoglobin subunit epsilon (147 aa).

The Globin domain maps to 3–147 (HLTAEEKAAI…VAIALGHKYH (145 aa)). Phosphoserine occurs at positions 14 and 51. Heme b-binding residues include H64 and H93.

The protein belongs to the globin family. Heterotetramer of two alpha chains and two epsilon chains in early embryonic hemoglobin Gower-2; two zeta chains and two epsilon chains in early embryonic hemoglobin Gower-1. Red blood cells.

Its function is as follows. The epsilon chain is a beta-type chain of early mammalian embryonic hemoglobin. This is Hemoglobin subunit epsilon (HBE1) from Ateles belzebuth (White-bellied spider monkey).